A 1246-amino-acid chain; its full sequence is Superkiller complex protein 2 (1246 aa).

Positions 220–246 (LGGGDEDENEAVGQPGGPRGDTVSASP) are disordered. Phosphoserine is present on residues Ser245 and Ser256. One can recognise a Helicase ATP-binding domain in the interval 319-475 (ILHLERHDSV…WIGRLKRRQI (157 aa)). 332–339 (AHTSAGKT) contributes to the ATP binding site. A DEVH box motif is present at residues 423 to 426 (DEVH). Positions 585–755 (GLTSLDLTTS…LTYTMILNLL (171 aa)) constitute a Helicase C-terminal domain.

The protein belongs to the helicase family. SKI2 subfamily. In terms of assembly, component of the SKI complex which consists of SKIC2, SKIC3 and SKIC8. Interacts with HBS1L isoform 2.

It is found in the nucleus. It localises to the cytoplasm. It carries out the reaction ATP + H2O = ADP + phosphate + H(+). Helicase component of the SKI complex, a multiprotein complex that assists the RNA-degrading exosome during the mRNA decay and quality-control pathways. The SKI complex catalyzes mRNA extraction from 80S ribosomal complexes in the 3'-5' direction and channels mRNA to the cytosolic exosome for degradation. SKI-mediated extraction of mRNA from stalled ribosomes allow binding of the Pelota-HBS1L complex and subsequent ribosome disassembly by ABCE1 for ribosome recycling. In the nucleus, the SKI complex associates with transcriptionally active genes in a manner dependent on PAF1 complex (PAF1C). The polypeptide is Superkiller complex protein 2 (Homo sapiens (Human)).